The chain runs to 135 residues: HTH-type transcriptional regulator DicA (135 aa).

In terms of domain architecture, HTH cro/C1-type spans 12–66; the sequence is IRYRRKNLKHTQRSLAKALKISHVSVSQWERGDSEPTGKNLFALSKVLQCSPTWI. A DNA-binding region (H-T-H motif) is located at residues 23–42; that stretch reads QRSLAKALKISHVSVSQWER.

In terms of biological role, this protein is a repressor of division inhibition gene dicB. The chain is HTH-type transcriptional regulator DicA (dicA) from Escherichia coli (strain K12).